The sequence spans 1005 residues: Myosin IE heavy chain (1005 aa).

The Myosin motor domain maps to 8–693 (EGVPDFVLLN…TLFYFEEKRE (686 aa)). 101–108 (GESGAGKT) is a binding site for ATP. Residues 539-562 (SDPLVQGLFPPTRPEDSKKRPETA) are disordered. Positions 551 to 560 (RPEDSKKRPE) are enriched in basic and acidic residues. Residues 556–630 (KKRPETAGSQ…RAGFAGRIEY (75 aa)) are actin-binding. IQ domains lie at 694 to 722 (LEMPRIVTLIQKTWRGYRARSKWNQRKAA) and 716 to 745 (WNQRKAAIKIQLFYRSYRYKKWFRELHRAF). The TH1 domain maps to 810–1004 (KKKWDFRRHF…KGNQATIQFK (195 aa)).

Belongs to the TRAFAC class myosin-kinesin ATPase superfamily. Myosin family. Myosin I heavy chain is single-headed. Dimer of a heavy and a light chain. Inability to self-assemble into filaments.

In terms of biological role, myosin is a protein that binds to actin and has ATPase activity that is activated by actin. May play a role in moving membranes relative to actin. This is Myosin IE heavy chain (myoE) from Dictyostelium discoideum (Social amoeba).